The following is a 588-amino-acid chain: Hyaluronan synthase 1 (588 aa).

The Cytoplasmic segment spans residues 1 to 28; it reads MKEKAAETMEIPEGIPKDLEPKHPTLWR. Residues 29 to 49 form a helical membrane-spanning segment; that stretch reads IIYYSFGVVLLATITAAYVAE. Over 50 to 61 the chain is Extracellular; that stretch reads FQVLKHEAILFS. The chain crosses the membrane as a helical span at residues 62–82; the sequence is LGLYGLAMLLHLMMQSLFAFL. Over 83–411 the chain is Cytoplasmic; sequence EIRRVNKSEL…IWMTYESVVS (329 aa). The helical transmembrane segment at 412-432 threads the bilayer; that stretch reads FIFPFFITATVIRLIYAGTIW. Position 433 (Asn-433) is a topological domain, extracellular. Residues 434-454 traverse the membrane as a helical segment; sequence VVWLLLCIQIMSLFKSIYACW. At 455-456 the chain is on the cytoplasmic side; it reads LR. A helical transmembrane segment spans residues 457–477; the sequence is GNFIMLLMSLYSMLYMTGLLP. The Extracellular segment spans residues 478–505; the sequence is SKYFALLTLNKTGWGTSGRKKIVGNYMP. The chain crosses the membrane as a helical span at residues 506–526; sequence ILPLSIWAAVLCGGVGYSIYM. The Cytoplasmic portion of the chain corresponds to 527 to 543; the sequence is DCQNDWSTPEKQKEMYH. The helical transmembrane segment at 544–564 threads the bilayer; it reads LLYGCVGYVMYWVIMAVMYWV. The Extracellular portion of the chain corresponds to 565-588; that stretch reads WVKRCCRKRSQTVTLVHDIPDMCV.

The protein belongs to the NodC/HAS family. The cofactor is Mg(2+). As to expression, expression moves as a gradient through the embryo. The mRNA is first expressed in the animal region of the blastula, and by early gastrula is found everywhere except in the outer layer of the dorsal blastopore lip. By mid-gastrula, protein is present in the inner ectodermal layer and the endoderm, then disappears from dorsal ectoderm as the neural plate is induced and later decays in a dorsoventral direction. Last expressed in ventral regions of the gut at the tailbud stage (at protein level).

It is found in the membrane. It catalyses the reaction [hyaluronan](n) + UDP-N-acetyl-alpha-D-glucosamine = N-acetyl-beta-D-glucosaminyl-(1-&gt;4)-[hyaluronan](n) + UDP + H(+). It carries out the reaction N-acetyl-beta-D-glucosaminyl-(1-&gt;4)-[hyaluronan](n) + UDP-alpha-D-glucuronate = [hyaluronan](n+1) + UDP + H(+). It participates in glycan biosynthesis; hyaluronan biosynthesis. In terms of biological role, catalyzes the addition of GlcNAc or GlcUA monosaccharides to the nascent hyaluronan polymer. Therefore, it is essential to hyaluronan synthesis a major component of most extracellular matrices that has a structural role in tissues architectures and regulates cell adhesion, migration and differentiation. Also able to catalyze the synthesis of chito-oligosaccharide depending on the substrate. This is Hyaluronan synthase 1 (has1) from Xenopus laevis (African clawed frog).